A 355-amino-acid chain; its full sequence is Cobalt-precorrin-5B C(1)-methyltransferase (355 aa).

It belongs to the CbiD family.

The enzyme catalyses Co-precorrin-5B + S-adenosyl-L-methionine = Co-precorrin-6A + S-adenosyl-L-homocysteine. The protein operates within cofactor biosynthesis; adenosylcobalamin biosynthesis; cob(II)yrinate a,c-diamide from sirohydrochlorin (anaerobic route): step 6/10. Catalyzes the methylation of C-1 in cobalt-precorrin-5B to form cobalt-precorrin-6A. In Parasynechococcus marenigrum (strain WH8102), this protein is Cobalt-precorrin-5B C(1)-methyltransferase.